Here is a 187-residue protein sequence, read N- to C-terminus: Shikimate kinase (187 aa).

Residue 14 to 19 (TSGKST) coordinates ATP. Ser-18 is a binding site for Mg(2+). Residues Asp-36, Arg-60, and Gly-82 each coordinate substrate. Arg-120 is an ATP binding site. Position 147 (Arg-147) interacts with substrate.

It belongs to the shikimate kinase family. As to quaternary structure, monomer. Mg(2+) is required as a cofactor.

It is found in the cytoplasm. The catalysed reaction is shikimate + ATP = 3-phosphoshikimate + ADP + H(+). Its pathway is metabolic intermediate biosynthesis; chorismate biosynthesis; chorismate from D-erythrose 4-phosphate and phosphoenolpyruvate: step 5/7. Its function is as follows. Catalyzes the specific phosphorylation of the 3-hydroxyl group of shikimic acid using ATP as a cosubstrate. This chain is Shikimate kinase, found in Chloroherpeton thalassium (strain ATCC 35110 / GB-78).